The following is a 129-amino-acid chain: Mitochondrial pyruvate carrier 2 (129 aa).

The Mitochondrial matrix portion of the chain corresponds to 2-22 (STSSVRFAFRRFWQSETGPKT). A helical membrane pass occupies residues 23 to 39 (VHFWAPTLKWGLVFAGF). Over 40–54 (SDMKRPVEKISGAQN) the chain is Mitochondrial intermembrane. The chain crosses the membrane as a helical span at residues 55–71 (LSLLSTALIWTRWSFVI). Over 72 to 74 (KPR) the chain is Mitochondrial matrix. Residues 75 to 91 (NILLASVNSFLCLTAGY) form a helical membrane-spanning segment. Topologically, residues 92 to 129 (QLGRIANYRIRNGDSISQLCSYILSGADESKKEITTGR) are mitochondrial intermembrane.

Belongs to the mitochondrial pyruvate carrier (MPC) (TC 2.A.105) family. In terms of assembly, the functional 150 kDa pyruvate import complex is a heteromer of MPC1 and either MPC2 or MPC3.

The protein resides in the mitochondrion. It is found in the mitochondrion inner membrane. The enzyme catalyses pyruvate(out) + H(+)(out) = pyruvate(in) + H(+)(in). Mediates the uptake of pyruvate into mitochondria. The polypeptide is Mitochondrial pyruvate carrier 2 (Saccharomyces cerevisiae (strain ATCC 204508 / S288c) (Baker's yeast)).